The sequence spans 249 residues: Zinc finger protein CG30 (249 aa).

The RING-type zinc-finger motif lies at 8-66 (CHICCSVGEIKNYFLQPVDAITILPIVELHTCRHQLCVMCVRKIAQRGRDKRVECPMCR).

This chain is Zinc finger protein CG30 (CG30), found in Orgyia pseudotsugata (Douglas-fir tussock moth).